We begin with the raw amino-acid sequence, 659 residues long: UvrABC system protein B (659 aa).

Positions 25–182 (QSIENGNRGQ…KKLIEIQYER (158 aa)) constitute a Helicase ATP-binding domain. Residue 38–45 (GVTGSGKT) participates in ATP binding. The Beta-hairpin motif lies at 91 to 114 (YYDYYQPEAYVPQTDTFIEKDASI). The Helicase C-terminal domain occupies 429–582 (QIDDLYGEIQ…QMEYNEEHNI (154 aa)). The 36-residue stretch at 622–657 (EKLIEQYEEEMKEAAKNLQFERAAELRDIIKDLKEN) folds into the UVR domain.

The protein belongs to the UvrB family. Forms a heterotetramer with UvrA during the search for lesions. Interacts with UvrC in an incision complex.

The protein resides in the cytoplasm. Its function is as follows. The UvrABC repair system catalyzes the recognition and processing of DNA lesions. A damage recognition complex composed of 2 UvrA and 2 UvrB subunits scans DNA for abnormalities. Upon binding of the UvrA(2)B(2) complex to a putative damaged site, the DNA wraps around one UvrB monomer. DNA wrap is dependent on ATP binding by UvrB and probably causes local melting of the DNA helix, facilitating insertion of UvrB beta-hairpin between the DNA strands. Then UvrB probes one DNA strand for the presence of a lesion. If a lesion is found the UvrA subunits dissociate and the UvrB-DNA preincision complex is formed. This complex is subsequently bound by UvrC and the second UvrB is released. If no lesion is found, the DNA wraps around the other UvrB subunit that will check the other stand for damage. The chain is UvrABC system protein B from Clostridium perfringens (strain SM101 / Type A).